The primary structure comprises 280 residues: MSRYDDLFARLDTAGEGAFVPFIMLSDPSPEEAFQIISTAIEAGADALELGVPFSDPVADGPTVAESHLRALDGGATVDSALEQIKRVRAAYPEVPIGMLIYGNVPFTRGLDRFYQEFAEAGADSILLPDVPVREGAPFSAAAAAAGIDPIYIAPANASEKTLEGVSAASKGYIYAISRDGVTGTERESSTDGLSAVVDNIKKFDGAPILLGFGISSPQHVADAIAAGASGAITGSAITKIIASHCEGEHPNPSTIRDMDGLKKDLTEFISAMKAATKKV.

Catalysis depends on proton acceptor residues E49 and D60.

It belongs to the TrpA family. In terms of assembly, tetramer of two alpha and two beta chains.

It catalyses the reaction (1S,2R)-1-C-(indol-3-yl)glycerol 3-phosphate + L-serine = D-glyceraldehyde 3-phosphate + L-tryptophan + H2O. It participates in amino-acid biosynthesis; L-tryptophan biosynthesis; L-tryptophan from chorismate: step 5/5. The alpha subunit is responsible for the aldol cleavage of indoleglycerol phosphate to indole and glyceraldehyde 3-phosphate. The chain is Tryptophan synthase alpha chain from Corynebacterium glutamicum (strain ATCC 13032 / DSM 20300 / JCM 1318 / BCRC 11384 / CCUG 27702 / LMG 3730 / NBRC 12168 / NCIMB 10025 / NRRL B-2784 / 534).